Reading from the N-terminus, the 276-residue chain is Shikimate dehydrogenase (NADP(+)) (276 aa).

Shikimate-binding positions include 15–17 (SMS) and Thr63. The active-site Proton acceptor is Lys67. Asp79 contributes to the NADP(+) binding site. The shikimate site is built by Asn88 and Asp103. NADP(+) is bound by residues 130-134 (GAGGA), 154-159 (NRTLSR), and Ile217. Tyr219 lines the shikimate pocket. An NADP(+)-binding site is contributed by Gly240.

This sequence belongs to the shikimate dehydrogenase family. In terms of assembly, homodimer.

It carries out the reaction shikimate + NADP(+) = 3-dehydroshikimate + NADPH + H(+). The protein operates within metabolic intermediate biosynthesis; chorismate biosynthesis; chorismate from D-erythrose 4-phosphate and phosphoenolpyruvate: step 4/7. Its function is as follows. Involved in the biosynthesis of the chorismate, which leads to the biosynthesis of aromatic amino acids. Catalyzes the reversible NADPH linked reduction of 3-dehydroshikimate (DHSA) to yield shikimate (SA). This is Shikimate dehydrogenase (NADP(+)) from Oceanobacillus iheyensis (strain DSM 14371 / CIP 107618 / JCM 11309 / KCTC 3954 / HTE831).